The chain runs to 242 residues: ATP-dependent dethiobiotin synthetase BioD (242 aa).

12-17 (EVGKTV) is a binding site for ATP. Residue Thr-16 coordinates Mg(2+). Lys-37 is an active-site residue. A substrate-binding site is contributed by Ser-41. ATP-binding positions include Asp-51 and 112–115 (EGAG). Mg(2+)-binding residues include Asp-51 and Glu-112.

The protein belongs to the dethiobiotin synthetase family. In terms of assembly, homodimer. Mg(2+) is required as a cofactor.

The protein resides in the cytoplasm. It catalyses the reaction (7R,8S)-7,8-diammoniononanoate + CO2 + ATP = (4R,5S)-dethiobiotin + ADP + phosphate + 3 H(+). It functions in the pathway cofactor biosynthesis; biotin biosynthesis; biotin from 7,8-diaminononanoate: step 1/2. In terms of biological role, catalyzes a mechanistically unusual reaction, the ATP-dependent insertion of CO2 between the N7 and N8 nitrogen atoms of 7,8-diaminopelargonic acid (DAPA, also called 7,8-diammoniononanoate) to form a ureido ring. This is ATP-dependent dethiobiotin synthetase BioD from Bacillus cereus (strain AH820).